The sequence spans 448 residues: MPLSHFSDLLTVSQLNIRVRDILEKNIGQIWLMAEISNFSQPSSGHWYFTLKDERTQVRCTMFRNNNRHIFFKVQNGLQVLVRACVSLYEPRGEYQLIVESMEPAGEGILRQKFEQLKKKLAAEGLFAEKYKKPLPDSVKQLGVITSISGAALFDILKVLQHRDPSLPVVIYPTKVQGEYAPSQIVKALSIANRRAECDLVILARGGGSLEDLSCFNDERVARAIFDSDLPIVSAIGHETDVSIADLVADLRASTPSAAAERVTRDRRDIIQKLGSHQQRMAMAMDYYFSKLRQRFVHLSHCIEQQHPQLELERQKMQLIHFKISMEKIIQAKLKGLIHQEAHLKKNVLRRAPQIQIYQYQKQIQEEFHQLKAAMERKIHHYVQRFAVVSSRLETVSPLATLARGYSVTCFSSGSMLKKIEQVQIGDELNTRLQGGWIKSQVLEIKKN.

The protein belongs to the XseA family. In terms of assembly, heterooligomer composed of large and small subunits.

It is found in the cytoplasm. It carries out the reaction Exonucleolytic cleavage in either 5'- to 3'- or 3'- to 5'-direction to yield nucleoside 5'-phosphates.. Its function is as follows. Bidirectionally degrades single-stranded DNA into large acid-insoluble oligonucleotides, which are then degraded further into small acid-soluble oligonucleotides. This chain is Exodeoxyribonuclease 7 large subunit, found in Hamiltonella defensa subsp. Acyrthosiphon pisum (strain 5AT).